Reading from the N-terminus, the 65-residue chain is Conopeptide Vt3.2 (65 aa).

Residues 1-12 form the signal peptide; it reads LLFPLATLQLNA. Residues 13-48 constitute a propeptide that is removed on maturation; sequence DQPVERNAENIQDLNPDKRFIFMPVPRRRGPYGSVH. Residue serine 64 is modified to Serine amide.

The protein belongs to the conotoxin M superfamily. Homodimer; disulfide-linked. In terms of tissue distribution, expressed by the venom duct.

The protein localises to the secreted. This is Conopeptide Vt3.2 from Conus planorbis (Planorbis cone).